Here is a 294-residue protein sequence, read N- to C-terminus: dTDP-4-dehydrorhamnose reductase (294 aa).

Residues 11–13, 38–39, and 62–64 each bind NADH; these read GQL, DI, and AYT. NADPH is bound by residues 12–13, 38–39, and 62–64; these read QL, DI, and AYT. Residue 103 to 104 coordinates dTDP-beta-L-rhamnose; sequence TD. Positions 127 and 131 each coordinate NADH. Tyrosine 127 and lysine 131 together coordinate NADPH. Catalysis depends on tyrosine 127, which acts as the Proton donor/acceptor. Tryptophan 152 is a dTDP-beta-L-rhamnose binding site.

Belongs to the dTDP-4-dehydrorhamnose reductase family. As to quaternary structure, homodimer. The cofactor is Mg(2+).

The enzyme catalyses dTDP-beta-L-rhamnose + NADP(+) = dTDP-4-dehydro-beta-L-rhamnose + NADPH + H(+). It participates in carbohydrate biosynthesis; dTDP-L-rhamnose biosynthesis. The protein operates within bacterial outer membrane biogenesis; LPS O-antigen biosynthesis. In terms of biological role, involved in the biosynthesis of the dTDP-L-rhamnose which is an important component of lipopolysaccharide (LPS). Catalyzes the reduction of dTDP-6-deoxy-L-lyxo-4-hexulose to yield dTDP-L-rhamnose. This chain is dTDP-4-dehydrorhamnose reductase, found in Aggregatibacter actinomycetemcomitans (Actinobacillus actinomycetemcomitans).